Here is a 186-residue protein sequence, read N- to C-terminus: dCTP deaminase, dUMP-forming (186 aa).

DCTP is bound by residues Lys-99 to Arg-104, Asp-117, Thr-125 to Glu-127, Gln-146, Tyr-159, Lys-166, and Gln-170. The active-site Proton donor/acceptor is the Glu-127.

Belongs to the dCTP deaminase family. Homotrimer.

The catalysed reaction is dCTP + 2 H2O = dUMP + NH4(+) + diphosphate. It functions in the pathway pyrimidine metabolism; dUMP biosynthesis; dUMP from dCTP: step 1/1. Bifunctional enzyme that catalyzes both the deamination of dCTP to dUTP and the hydrolysis of dUTP to dUMP without releasing the toxic dUTP intermediate. The protein is dCTP deaminase, dUMP-forming of Methanosphaerula palustris (strain ATCC BAA-1556 / DSM 19958 / E1-9c).